The following is a 281-amino-acid chain: Undecaprenyl-diphosphatase (281 aa).

A run of 8 helical transmembrane segments spans residues 2 to 22 (FDLIKAIIIGIIEGLTEFLPV), 46 to 66 (AFSSVFDYSIQLGAIFAVIQL), 93 to 113 (VIVGVLPAIVFGFALNDFMDA), 115 to 135 (LMNFWVVSATLIIYGIAFIVI), 152 to 172 (ITFKLALYIGLFQVLSIVPGT), 190 to 210 (FVAAEFSFFLSIPVMFGVTFL), 228 to 248 (IVMLVGFIVSWIVAWFAIKFM), and 259 to 279 (VFGYYRIIIGAIFLVFGILGI).

This sequence belongs to the UppP family.

The protein resides in the cell membrane. The catalysed reaction is di-trans,octa-cis-undecaprenyl diphosphate + H2O = di-trans,octa-cis-undecaprenyl phosphate + phosphate + H(+). Its function is as follows. Catalyzes the dephosphorylation of undecaprenyl diphosphate (UPP). Confers resistance to bacitracin. The protein is Undecaprenyl-diphosphatase of Leuconostoc mesenteroides subsp. mesenteroides (strain ATCC 8293 / DSM 20343 / BCRC 11652 / CCM 1803 / JCM 6124 / NCDO 523 / NBRC 100496 / NCIMB 8023 / NCTC 12954 / NRRL B-1118 / 37Y).